Reading from the N-terminus, the 94-residue chain is Nucleoid-associated protein MYPE8070 (94 aa).

This sequence belongs to the YbaB/EbfC family. Homodimer.

Its subcellular location is the cytoplasm. It is found in the nucleoid. Its function is as follows. Binds to DNA and alters its conformation. May be involved in regulation of gene expression, nucleoid organization and DNA protection. In Malacoplasma penetrans (strain HF-2) (Mycoplasma penetrans), this protein is Nucleoid-associated protein MYPE8070.